The following is a 222-amino-acid chain: Embryonic stem cell-related gene protein (222 aa).

As to expression, expressed only in fetal ovary and in undifferentiated ES cells.

It is found in the nucleus. This Homo sapiens (Human) protein is Embryonic stem cell-related gene protein (ESRG).